A 426-amino-acid polypeptide reads, in one-letter code: L-cysteine:1D-myo-inositol 2-amino-2-deoxy-alpha-D-glucopyranoside ligase (426 aa).

Residue cysteine 45 participates in Zn(2+) binding. Residues 45–48 (CGIT), threonine 60, and 83–85 (NVT) each bind L-cysteinyl-5'-AMP. Residues 47–57 (ITPYDATHIGH) carry the 'HIGH' region motif. The 'ERGGDP' region signature appears at 199–204 (ERGGDP). An L-cysteinyl-5'-AMP-binding site is contributed by tryptophan 239. Residue cysteine 243 participates in Zn(2+) binding. 261-263 (GSD) serves as a coordination point for L-cysteinyl-5'-AMP. Histidine 268 is a binding site for Zn(2+). Valine 294 contacts L-cysteinyl-5'-AMP. A 'KMSKS' region motif is present at residues 300–304 (KMSKS).

The protein belongs to the class-I aminoacyl-tRNA synthetase family. MshC subfamily. Monomer. It depends on Zn(2+) as a cofactor.

It carries out the reaction 1D-myo-inositol 2-amino-2-deoxy-alpha-D-glucopyranoside + L-cysteine + ATP = 1D-myo-inositol 2-(L-cysteinylamino)-2-deoxy-alpha-D-glucopyranoside + AMP + diphosphate + H(+). Catalyzes the ATP-dependent condensation of GlcN-Ins and L-cysteine to form L-Cys-GlcN-Ins. The chain is L-cysteine:1D-myo-inositol 2-amino-2-deoxy-alpha-D-glucopyranoside ligase from Clavibacter michiganensis subsp. michiganensis (strain NCPPB 382).